The following is a 232-amino-acid chain: Noggin (232 aa).

The N-terminal stretch at 1–27 (MERCPSLGVTLYALVVVLGLRAAPAGG) is a signal peptide. A glycan (N-linked (GlcNAc...) asparagine) is linked at asparagine 62. Residues 77–99 (GFMATSPPEDRPGGGGGPAGGAE) form a disordered region. 4 disulfide bridges follow: cysteine 155–cysteine 192, cysteine 178–cysteine 228, cysteine 184–cysteine 230, and cysteine 207–cysteine 215.

Belongs to the noggin family. As to quaternary structure, homodimer. Interacts with GDF5; inhibits chondrocyte differentiation. As to expression, expressed in condensing cartilage and immature chondrocytes.

The protein resides in the secreted. Functionally, essential for cartilage morphogenesis and joint formation. Inhibitor of bone morphogenetic proteins (BMP) signaling which is required for growth and patterning of the neural tube and somite. Inhibits chondrocyte differentiation through its interaction with GDF5 and, probably, GDF6. The chain is Noggin (Nog) from Mus musculus (Mouse).